We begin with the raw amino-acid sequence, 321 residues long: Hydropyrene synthase (321 aa).

Positions 82, 225, 229, and 233 each coordinate Mg(2+). Residues 82–87 carry the DDxx(x)D/E motif motif; the sequence is DDRAID. Residues 225–233 carry the NDxxSxxxD/E motif motif; the sequence is NDLHSFARE.

The protein belongs to the terpene synthase family. Mg(2+) serves as cofactor.

It carries out the reaction (2E,6E,10E)-geranylgeranyl diphosphate = hydropyrene + diphosphate. The catalysed reaction is (2E,6E,10E)-geranylgeranyl diphosphate + H2O = hydropyrenol + diphosphate. It catalyses the reaction (2E,6E,10E)-geranylgeranyl diphosphate = isoelisabethatriene + diphosphate. Its pathway is secondary metabolite biosynthesis; terpenoid biosynthesis. Its function is as follows. Terpene synthase that catalyzes the conversion of geranylgeranyl diphosphate (GGPP) into a mixture of diterpenes, including hydropyrene (HP), hydropyrenol (HPol), isoelisabethatriene and traces of isoelisabethatriene B. Hydropyrene is the main product. Some other diterpenoids are also produced in very low quantities. This Streptomyces clavuligerus protein is Hydropyrene synthase.